A 175-amino-acid polypeptide reads, in one-letter code: RNA pyrophosphohydrolase (175 aa).

The 145-residue stretch at 6-150 (GFRPNVGIVI…KREVYRRVMK (145 aa)) folds into the Nudix hydrolase domain. Positions 38-59 (GGVDDGETPEQAMYRELYEEIG) match the Nudix box motif.

Belongs to the Nudix hydrolase family. RppH subfamily. A divalent metal cation is required as a cofactor.

Functionally, accelerates the degradation of transcripts by removing pyrophosphate from the 5'-end of triphosphorylated RNA, leading to a more labile monophosphorylated state that can stimulate subsequent ribonuclease cleavage. The protein is RNA pyrophosphohydrolase of Aeromonas hydrophila subsp. hydrophila (strain ATCC 7966 / DSM 30187 / BCRC 13018 / CCUG 14551 / JCM 1027 / KCTC 2358 / NCIMB 9240 / NCTC 8049).